We begin with the raw amino-acid sequence, 312 residues long: Olfactory receptor 8G50 (312 aa).

The Extracellular segment spans residues 1-28 (MAYSNQSRVTEFIISGLTNKPELQLPLF). Asn5 carries N-linked (GlcNAc...) asparagine glycosylation. The helical transmembrane segment at 29–49 (LLFLGIYLFTVLGNLGMIILI) threads the bilayer. The Cytoplasmic segment spans residues 50–56 (LLSSHLH). The chain crosses the membrane as a helical span at residues 57-77 (TPMYFFLSSLSFIDLCYSTII). Over 78-99 (TPKMLVNFVTTKNVISYQECMT) the chain is Extracellular. Cys97 and Cys189 are disulfide-bonded. The helical transmembrane segment at 100 to 120 (QLYFFIAFVISECHMLAAMAY) threads the bilayer. The Cytoplasmic portion of the chain corresponds to 121 to 143 (DRYVAICNPLLYNVTMSYQVCSW). A helical transmembrane segment spans residues 144-164 (MVGGVYGMGFIGAAIHTFCML). Residues 165 to 204 (RVVFCKDNIINHYFCDLFPLMELACSSTYVNEVVLLSLSA) lie on the Extracellular side of the membrane. The chain crosses the membrane as a helical span at residues 205 to 225 (FNIFIPTLTILGSYIFIIISI). Residues 226 to 244 (LRIKSTEGRFKAFSTCSSH) lie on the Cytoplasmic side of the membrane. The helical transmembrane segment at 245 to 265 (FSAVSVFFGSLAFMYLQPFSV) threads the bilayer. Over 266 to 274 (SSKDKGKVS) the chain is Extracellular. A helical transmembrane segment spans residues 275 to 292 (SVFYTTIVPMLNPMIYSL). The Cytoplasmic segment spans residues 293–312 (RNRDVKLALNKLFQKKKFHV).

This sequence belongs to the G-protein coupled receptor 1 family.

The protein localises to the cell membrane. Odorant receptor. This Mus musculus (Mouse) protein is Olfactory receptor 8G50.